Here is a 172-residue protein sequence, read N- to C-terminus: Ribosome maturation factor RimM (172 aa).

Residues 96–168 (EGEFYYHQII…RVDVELMEGL (73 aa)) form the PRC barrel domain.

It belongs to the RimM family. As to quaternary structure, binds ribosomal protein uS19.

It localises to the cytoplasm. Functionally, an accessory protein needed during the final step in the assembly of 30S ribosomal subunit, possibly for assembly of the head region. Essential for efficient processing of 16S rRNA. May be needed both before and after RbfA during the maturation of 16S rRNA. It has affinity for free ribosomal 30S subunits but not for 70S ribosomes. The sequence is that of Ribosome maturation factor RimM from Streptococcus pyogenes serotype M28 (strain MGAS6180).